Reading from the N-terminus, the 307-residue chain is Homoserine O-acetyltransferase (307 aa).

Cysteine 142 functions as the Acyl-thioester intermediate in the catalytic mechanism. Lysine 163 and serine 192 together coordinate substrate. The Proton acceptor role is filled by histidine 235. Glutamate 237 is a catalytic residue. Arginine 249 provides a ligand contact to substrate.

It belongs to the MetA family.

It localises to the cytoplasm. It carries out the reaction L-homoserine + acetyl-CoA = O-acetyl-L-homoserine + CoA. The protein operates within amino-acid biosynthesis; L-methionine biosynthesis via de novo pathway; O-acetyl-L-homoserine from L-homoserine: step 1/1. Transfers an acetyl group from acetyl-CoA to L-homoserine, forming acetyl-L-homoserine. The polypeptide is Homoserine O-acetyltransferase (Desulfitobacterium hafniense (strain DSM 10664 / DCB-2)).